The following is a 91-amino-acid chain: Small ribosomal subunit protein uS15 (91 aa).

Belongs to the universal ribosomal protein uS15 family. Part of the 30S ribosomal subunit. Forms a bridge to the 50S subunit in the 70S ribosome, contacting the 23S rRNA.

In terms of biological role, one of the primary rRNA binding proteins, it binds directly to 16S rRNA where it helps nucleate assembly of the platform of the 30S subunit by binding and bridging several RNA helices of the 16S rRNA. Forms an intersubunit bridge (bridge B4) with the 23S rRNA of the 50S subunit in the ribosome. This Nautilia profundicola (strain ATCC BAA-1463 / DSM 18972 / AmH) protein is Small ribosomal subunit protein uS15.